A 671-amino-acid chain; its full sequence is MRAVSDFLKNKWVAVPAVALLILSLGFLAQNYITGSFVSGDQIEYTSNSEFFDGEVFVINYIGDRTTDKIHAEIPASELASAADGEVTKELTIDITSQETYARYSTTSTSLSRIYAFKAINSEVFTDTSSSEVESRKQSWAEQNCYDIDGDSEIEQGDDYTQRFWVDGAIADYYNAQVYCVRENGYYGNIAELSSPDKEFEAEVEVKADGETPQSTTLSNSDLGQGRCDNIGEYVRACWTGLNPTGEGVPEPYNVYAIHSNTFSPEWRVISAERYSSYNSYVENNLYSQIEAWKEGSLSQEEVVSTANDQAAQAAQRVSSGSFTDYQVEDSSYENGQIRLNPSYDIAWPEFTFYVDGADYISVEKPVGEPRIVNVEGDEFGEKQSGTVTAEVENTASYEGSFSARVSKCSDSFGYDSLQETKTVGPGETVSFDFRVSFTSDSFDQKTVSGSCEIVVSDTGDSSNSDTAVVDVEATQSNECTPNEEFVRTINSTHSRILECSSDGLTTTEVDVCGDGEEAAFRDSSWTCVSDGTLPGGGDGSGGSGGGGDTDDCVVFAVGDLEIEDPFCADGPLEMLSKMFHLVAGTAVAFFTGSLGYRAGRWVDGEYQIKGGFDPLKSRSVSRAKRGRFLIGLIAELVSFLLGFYVILLVPIWAQLMVILGYVLFKYYTPF.

Topologically, residues 1 to 12 (MRAVSDFLKNKW) are cytoplasmic. Residues 13–33 (VAVPAVALLILSLGFLAQNYI) form a helical membrane-spanning segment. Topologically, residues 34–574 (TGSFVSGDQI…DPFCADGPLE (541 aa)) are extracellular. Cystine bridges form between Cys-145–Cys-180, Cys-409–Cys-452, Cys-480–Cys-500, and Cys-513–Cys-528. A fusion loop region spans residues 168–173 (GAIADY). Residues 575 to 595 (MLSKMFHLVAGTAVAFFTGSL) traverse the membrane as a helical segment. Topologically, residues 596-628 (GYRAGRWVDGEYQIKGGFDPLKSRSVSRAKRGR) are cytoplasmic. The helical transmembrane segment at 629–649 (FLIGLIAELVSFLLGFYVILL) threads the bilayer. Residue Val-650 is a topological domain, extracellular. Residues 651 to 671 (PIWAQLMVILGYVLFKYYTPF) form a helical membrane-spanning segment.

Belongs to the HAP2/GCS1 family. Fusexin 1 subfamily. Homotrimer stabilized by interdomain contacts and numerous Ca(2+) and Na(+) ions.

Its subcellular location is the cell surface. It localises to the cell membrane. In terms of biological role, exhibits fusogenic activity. Mediates cell-cell fusion in mammalian cells (bilateral fusion). This chain is Fusexin 1, found in Natrinema altunense (strain JCM 12890 / CGMCC 1.3731 / AJ2).